Consider the following 947-residue polypeptide: Mitogen-activated protein kinase kinase kinase 14 (947 aa).

Disordered regions lie at residues 1 to 37 and 135 to 171; these read MAVM…KKQS and KGKR…TPEQ. A compositionally biased stretch (basic residues) spans 135–151; sequence KGKRRSKARKKRKKKSS. Residues 400–655 enclose the Protein kinase domain; sequence ATHQLRLGRG…ELGGKVNRAL (256 aa). Positions 401 to 653 are interaction with ZFP91; sequence THQLRLGRGS…AAELGGKVNR (253 aa). ATP contacts are provided by residues 406–414 and K429; that span reads LGRGSFGEV. D515 acts as the Proton acceptor in catalysis. The residue at position 559 (T559) is a Phosphothreonine. Disordered regions lie at residues 662-766 and 805-830; these read KSPW…ATVP and LSDD…GVHS. Positions 665-674 are enriched in basic and acidic residues; it reads WRGEYKEPRH. The segment covering 713 to 727 has biased composition (pro residues); the sequence is LQPPLPPEPPEPNKS. Over residues 741–752 the composition is skewed to low complexity; the sequence is EPLPLSSLEPAP. Over residues 814–829 the composition is skewed to polar residues; sequence SKASQSSRDTLSSGVH.

The protein belongs to the protein kinase superfamily. STE Ser/Thr protein kinase family. MAP kinase kinase kinase subfamily. Interacts with TRAF2, TRAF5, TRAF6, IKKA and NFKB2/P100. Interacts with TRAF3 and PELI3. Interacts with NIBP; the interaction is direct. Interacts with ARRB1 and ARRB2. Interacts with GRB10. Interacts with ZFP91. Interacts with NLRP12; this interaction promotes proteasomal degradation of MAP3K14. Directly interacts with DDX3X. Interacts (via C-terminus and kinase domain) with PPPC3A (via N-terminus) and PPP3CB. Autophosphorylated. Phosphorylation at Thr-559 is required to activate its kinase activity and 'Lys-63'-linked polyubiquitination. Phosphorylated by CHUK/IKKA leading to MAP3K14 destabilization. In terms of processing, ubiquitinated. Undergoes both 'Lys-48'- and 'Lys-63'-linked polyubiquitination. 'Lys-48'-linked polyubiquitination leads to its degradation by the proteasome, while 'Lys-63'-linked polyubiquitination stabilizes and activates it. As to expression, weakly expressed in testis, small intestine, spleen, thymus, peripheral blood leukocytes, prostate, ovary and colon.

The protein localises to the cytoplasm. It catalyses the reaction L-seryl-[protein] + ATP = O-phospho-L-seryl-[protein] + ADP + H(+). The catalysed reaction is L-threonyl-[protein] + ATP = O-phospho-L-threonyl-[protein] + ADP + H(+). Lymphotoxin beta-activated kinase which seems to be exclusively involved in the activation of NF-kappa-B and its transcriptional activity. Phosphorylates CHUK/IKKA, thereby promoting proteolytic processing of NFKB2/P100, which leads to NF-kappa-B activation via the non-canonical pathway. Has an essential role in the non-canonical NF-kappa-B signaling that regulates genes encoding molecules involved in B-cell survival, lymphoid organogenesis, and immune response. Could act in a receptor-selective manner. The sequence is that of Mitogen-activated protein kinase kinase kinase 14 from Homo sapiens (Human).